A 209-amino-acid polypeptide reads, in one-letter code: Thymidine kinase (209 aa).

ATP-binding positions include 25 to 32 (GCMFAGKT) and 103 to 106 (DEVQ). Glu104 (proton acceptor) is an active-site residue. Positions 160, 163, 198, and 201 each coordinate Zn(2+).

It belongs to the thymidine kinase family. In terms of assembly, homotetramer.

The protein localises to the cytoplasm. The catalysed reaction is thymidine + ATP = dTMP + ADP + H(+). The protein is Thymidine kinase of Mycoplasma mycoides subsp. mycoides SC (strain CCUG 32753 / NCTC 10114 / PG1).